Here is a 719-residue protein sequence, read N- to C-terminus: DNA ligase (719 aa).

NAD(+)-binding positions include 42–46 (DAEYD), 91–92 (SL), and E125. Catalysis depends on K127, which acts as the N6-AMP-lysine intermediate. NAD(+) contacts are provided by R148, E184, K300, and K324. Zn(2+) contacts are provided by C429, C432, C447, and C453. The BRCT domain maps to 638–719 (TASSPIAEKI…WMRLIKGHNI (82 aa)).

This sequence belongs to the NAD-dependent DNA ligase family. LigA subfamily. Requires Mg(2+) as cofactor. Mn(2+) is required as a cofactor.

The enzyme catalyses NAD(+) + (deoxyribonucleotide)n-3'-hydroxyl + 5'-phospho-(deoxyribonucleotide)m = (deoxyribonucleotide)n+m + AMP + beta-nicotinamide D-nucleotide.. Its function is as follows. DNA ligase that catalyzes the formation of phosphodiester linkages between 5'-phosphoryl and 3'-hydroxyl groups in double-stranded DNA using NAD as a coenzyme and as the energy source for the reaction. It is essential for DNA replication and repair of damaged DNA. The polypeptide is DNA ligase (Bartonella tribocorum (strain CIP 105476 / IBS 506)).